Here is a 185-residue protein sequence, read N- to C-terminus: MSKSASRARLLEIIRRRSFGRGEVTLASGRKSDFYFNLKPTMMDPEGATLLAELTYEALKDEGFDYIGGLEMGAVPLAGAIAQISWIKGHPIAAFFVRKKPKEHGAKLAIEGLTRDETLAGKRIVVVEDVTTTGGSAMKAVETLREAGANVSLVFTMVDREEGAAETFAAAGLPFRALYKAREFL.

5-phospho-alpha-D-ribose 1-diphosphate contacts are provided by residues R98, K99, K102, H104, and 128–136; that span reads EDVTTTGGS. Orotate-binding residues include T132 and R160.

Belongs to the purine/pyrimidine phosphoribosyltransferase family. PyrE subfamily. As to quaternary structure, homodimer. The cofactor is Mg(2+).

It carries out the reaction orotidine 5'-phosphate + diphosphate = orotate + 5-phospho-alpha-D-ribose 1-diphosphate. The protein operates within pyrimidine metabolism; UMP biosynthesis via de novo pathway; UMP from orotate: step 1/2. Its function is as follows. Catalyzes the transfer of a ribosyl phosphate group from 5-phosphoribose 1-diphosphate to orotate, leading to the formation of orotidine monophosphate (OMP). This chain is Orotate phosphoribosyltransferase, found in Bradyrhizobium sp. (strain BTAi1 / ATCC BAA-1182).